The chain runs to 197 residues: Dephospho-CoA kinase (197 aa).

The DPCK domain maps to 2–197 (IVGLTGGIAS…YQQILSLNAA (196 aa)). An ATP-binding site is contributed by 10–15 (ASGKTL).

It belongs to the CoaE family.

The protein localises to the cytoplasm. The enzyme catalyses 3'-dephospho-CoA + ATP = ADP + CoA + H(+). The protein operates within cofactor biosynthesis; coenzyme A biosynthesis; CoA from (R)-pantothenate: step 5/5. In terms of biological role, catalyzes the phosphorylation of the 3'-hydroxyl group of dephosphocoenzyme A to form coenzyme A. The protein is Dephospho-CoA kinase of Dichelobacter nodosus (Bacteroides nodosus).